Consider the following 442-residue polypeptide: GTPase Der (442 aa).

EngA-type G domains lie at 2-167 (RTIA…PIQN) and 175-351 (FKFC…EQAM). Residues 8-15 (GKPNVGKS), 55-59 (DTGGI), 119-122 (NKVE), 181-188 (GRPNVGKS), 228-232 (DTAGV), and 293-296 (NKWD) each bind GTP. Residues 352-436 (RKVATSLLND…PITLYWQDKN (85 aa)) form the KH-like domain.

Belongs to the TRAFAC class TrmE-Era-EngA-EngB-Septin-like GTPase superfamily. EngA (Der) GTPase family. Associates with the 50S ribosomal subunit.

Functionally, GTPase that plays an essential role in the late steps of ribosome biogenesis. The protein is GTPase Der of Ureaplasma urealyticum serovar 10 (strain ATCC 33699 / Western).